The primary structure comprises 436 residues: 3-hydroxy-3-methylglutaryl-coenzyme A reductase (436 aa).

Residues Glu-99, Lys-277, and Asp-293 each act as charge relay system in the active site. His-390 (proton donor) is an active-site residue.

It belongs to the HMG-CoA reductase family.

The enzyme catalyses (R)-mevalonate + 2 NADP(+) + CoA = (3S)-3-hydroxy-3-methylglutaryl-CoA + 2 NADPH + 2 H(+). Its pathway is metabolic intermediate biosynthesis; (R)-mevalonate biosynthesis; (R)-mevalonate from acetyl-CoA: step 3/3. Its function is as follows. Converts HMG-CoA to mevalonate. This chain is 3-hydroxy-3-methylglutaryl-coenzyme A reductase (hmgA), found in Archaeoglobus fulgidus (strain ATCC 49558 / DSM 4304 / JCM 9628 / NBRC 100126 / VC-16).